The following is a 350-amino-acid chain: Protein-glutamate methylesterase/protein-glutamine glutaminase 1 (350 aa).

Positions 6 to 123 (RVLVVDDSAL…GRSVENYAEE (118 aa)) constitute a Response regulatory domain. Position 57 is a 4-aspartylphosphate (Asp-57). The CheB-type methylesterase domain occupies 159-350 (LGASGKIIFV…ARRVLGAVSA (192 aa)). Residues Ser-171, His-197, and Asp-293 contribute to the active site.

Belongs to the CheB family. In terms of processing, phosphorylated by CheA. Phosphorylation of the N-terminal regulatory domain activates the methylesterase activity.

It localises to the cytoplasm. It carries out the reaction [protein]-L-glutamate 5-O-methyl ester + H2O = L-glutamyl-[protein] + methanol + H(+). The enzyme catalyses L-glutaminyl-[protein] + H2O = L-glutamyl-[protein] + NH4(+). In terms of biological role, involved in chemotaxis. Part of a chemotaxis signal transduction system that modulates chemotaxis in response to various stimuli. Catalyzes the demethylation of specific methylglutamate residues introduced into the chemoreceptors (methyl-accepting chemotaxis proteins or MCP) by CheR. Also mediates the irreversible deamidation of specific glutamine residues to glutamic acid. The chain is Protein-glutamate methylesterase/protein-glutamine glutaminase 1 from Dechloromonas aromatica (strain RCB).